The following is a 672-amino-acid chain: MESIEEKLTQLRTTLRHHEFLYHVMDAPEVPDAEYDRLMRELRALEEAHPELVTPDSPTQRVGAAPLTEFSQVRHEVPMLSLDNVFDEASFLAFNKRVQDRLKSTDALVYCCELKLDGLAVSLLYENGLLVRAATRGDGTTGEDITLNVRTIRAIPLKLRGDNIPARLEVRGEVFLPQAGFEKINEEARRTGGKVFANPRNAAAGSLRQLDPRVTAKRPLTFFCYGVGLLEGGELPRSHMERLQQFKAWGLPVSDRIRLVKTPEEVLAFYHQVEADRPTLGFDIDGVVIKVDSLELQEQLGFVARAPRWAVAFKFPAQEQMTTVRDVEFQVGRTGAITPVARLEPVQVAGVLVSNATLHNADEIARLGLRIGDKVVIRRAGDVIPQVVNVVLSERPEETRPVVFPAQCPVCGSDVERVEGEAVTRCTGGLICGAQRKEALKHFVSRRAMDVDGMGDKIIDQLVEKEYVHTPADLFRLTAGKLTGLDRMGPKSAQNLVNALEKAKETTFARFLYALGIREVGEATAAGLAAHFGTLEALINASIDDLQKVPDVGIVVATHVFNFFEEESNRAVIRDLTEEVGIHWPAPQVVKAEEIDSPFAGKTVVLTGTLSQMSRDDAKARLAALGAKVSGSVSKKTDLLIAGEAAGSKLAKAQELGIEVIDEAEMLRLLGE.

NAD(+) contacts are provided by residues D32–D36, S81–L82, and E113. The active-site N6-AMP-lysine intermediate is K115. 4 residues coordinate NAD(+): R136, E173, K290, and K314. Positions 408, 411, 426, and 432 each coordinate Zn(2+). Residues E594–E672 form the BRCT domain.

It belongs to the NAD-dependent DNA ligase family. LigA subfamily. Mg(2+) is required as a cofactor. The cofactor is Mn(2+).

It catalyses the reaction NAD(+) + (deoxyribonucleotide)n-3'-hydroxyl + 5'-phospho-(deoxyribonucleotide)m = (deoxyribonucleotide)n+m + AMP + beta-nicotinamide D-nucleotide.. Its function is as follows. DNA ligase that catalyzes the formation of phosphodiester linkages between 5'-phosphoryl and 3'-hydroxyl groups in double-stranded DNA using NAD as a coenzyme and as the energy source for the reaction. It is essential for DNA replication and repair of damaged DNA. The sequence is that of DNA ligase from Cronobacter sakazakii (strain ATCC BAA-894) (Enterobacter sakazakii).